Here is a 560-residue protein sequence, read N- to C-terminus: OTU domain-containing protein 5-A (560 aa).

Disordered regions lie at residues 1–100 (MTIL…MACV) and 141–190 (GGGT…QSED). The span at 17 to 32 (DHPDDPDRRTGSDPHQ) shows a compositional bias: basic and acidic residues. A compositionally biased stretch (gly residues) spans 141-163 (GGGTGPGAAGGGGGGGGGGGVGG). One can recognise an OTU domain in the interval 211–334 (FVIKKMKEDG…NIHYNSVVNP (124 aa)). Residues 216 to 222 (MKEDGAC) form a cys-loop region. Asp-219 is a catalytic residue. Cys-222 functions as the Nucleophile in the catalytic mechanism. The interval 271–281 (KRKNNCHGNHI) is variable-loop. The tract at residues 322-327 (YHRNIH) is his-loop. His-327 is an active-site residue. A disordered region spans residues 411–496 (ARQPRKASAT…ACVGPDRPTS (86 aa)). Low complexity-rich tracts occupy residues 417–430 (ASAT…AASS) and 437–448 (ARSPRQRSSAPS).

This sequence belongs to the peptidase C85 family.

The enzyme catalyses Thiol-dependent hydrolysis of ester, thioester, amide, peptide and isopeptide bonds formed by the C-terminal Gly of ubiquitin (a 76-residue protein attached to proteins as an intracellular targeting signal).. Deubiquitinating enzyme that may function as negative regulator of the innate immune system. Has peptidase activity towards 'Lys-48'- and 'Lys-63'-linked polyubiquitin chains. Can also cleave 'Lys-11'-linked ubiquitin chains (in vitro). This Danio rerio (Zebrafish) protein is OTU domain-containing protein 5-A (otud5a).